Here is a 63-residue protein sequence, read N- to C-terminus: MKANELREKSVEQLNEQLLELLRDQFNLRMQKATGQLGQSHLLSQVKRDIARVKTVLNQQAGK.

Belongs to the universal ribosomal protein uL29 family.

This Stutzerimonas stutzeri (strain A1501) (Pseudomonas stutzeri) protein is Large ribosomal subunit protein uL29.